Consider the following 141-residue polypeptide: Large ribosomal subunit protein uL16 (141 aa).

The disordered stretch occupies residues methionine 1–arginine 23.

It belongs to the universal ribosomal protein uL16 family. As to quaternary structure, part of the 50S ribosomal subunit.

Binds 23S rRNA and is also seen to make contacts with the A and possibly P site tRNAs. The protein is Large ribosomal subunit protein uL16 of Helicobacter acinonychis (strain Sheeba).